The sequence spans 102 residues: Small ribosomal subunit protein uS10 (102 aa).

This sequence belongs to the universal ribosomal protein uS10 family. Part of the 30S ribosomal subunit.

Involved in the binding of tRNA to the ribosomes. The chain is Small ribosomal subunit protein uS10 from Sulfolobus acidocaldarius (strain ATCC 33909 / DSM 639 / JCM 8929 / NBRC 15157 / NCIMB 11770).